The primary structure comprises 419 residues: 3-isopropylmalate dehydratase large subunit (419 aa).

[4Fe-4S] cluster-binding residues include Cys-300, Cys-360, and Cys-363.

Belongs to the aconitase/IPM isomerase family. LeuC type 2 subfamily. In terms of assembly, heterodimer of LeuC and LeuD. It depends on [4Fe-4S] cluster as a cofactor.

The catalysed reaction is (2R,3S)-3-isopropylmalate = (2S)-2-isopropylmalate. It participates in amino-acid biosynthesis; L-leucine biosynthesis; L-leucine from 3-methyl-2-oxobutanoate: step 2/4. In terms of biological role, catalyzes the isomerization between 2-isopropylmalate and 3-isopropylmalate, via the formation of 2-isopropylmaleate. The chain is 3-isopropylmalate dehydratase large subunit from Nitratidesulfovibrio vulgaris (strain DP4) (Desulfovibrio vulgaris).